The chain runs to 95 residues: MNLKPLADRVIVKPAPAEEKTKGGLYIPDTGKEKPMYGEVVAVGPGKVSDAGQVVAMQVKAGDKVLYGKYSGTEVHVEGEDYLIMRESDIFAILG.

Belongs to the GroES chaperonin family. Heptamer of 7 subunits arranged in a ring. Interacts with the chaperonin GroEL.

It localises to the cytoplasm. Together with the chaperonin GroEL, plays an essential role in assisting protein folding. The GroEL-GroES system forms a nano-cage that allows encapsulation of the non-native substrate proteins and provides a physical environment optimized to promote and accelerate protein folding. GroES binds to the apical surface of the GroEL ring, thereby capping the opening of the GroEL channel. The polypeptide is Co-chaperonin GroES (Chlorobaculum tepidum (strain ATCC 49652 / DSM 12025 / NBRC 103806 / TLS) (Chlorobium tepidum)).